Reading from the N-terminus, the 951-residue chain is MPGPLRLLCFFALGLLGSAGPSGAAPPLCAAPCSCDGDRRVDCSGKGLTAVPEGLSAFTQALDISMNNITQLPEDAFKNFPFLEELQLAGNDLSFIHPKALSGLKELKVLTLQNNQLKTVPSEAIRGLSALQSLRLDANHITSVPEDSFEGLVQLRHLWLDDNILTEVPVRPLSNLPTLQALTLALNNISSIPDFAFTNLSSLVVLHLHNNKIKSLSQHCFDGLDNLETLDLNYNNLDEFPQAIKALPSLKELGFHSNSISVIPDGAFAGNPLLRTIHLYDNPLSFVGNSAFHNLSDLHSLVIRGASLVQWFPNLAGTVHLESLTLTGTKISSIPDDLCQNQKMLRTLDLSYNDIRDLPSFNGCRALEEISLQRNQISLIKETTFQGLTSLRILDLSRNLIREIHSGAFAKLGTITNLDVSFNELTSFPTEGLNGLNQLKLVGNFQLKDALAARDFANLRSLSVPYAYQCCAFWGCDSYANLNTEDNSPQDHSVTKEKGATDAANATSTAESEEHSQIIIHCTPSTGAFKPCEYLLGSWMIRLTVWFIFLVALLFNLLVILTVFASCSSLPASKLFIGLISVSNLLMGIYTGILTFLDAVSWGRFAEFGIWWETGSGCKVAGSLAVFSSESAVFLLTLAAVERSVFAKDVMKNGKSSHLRQFQVAALVALLGAAIAGCFPLFHGGQYSASPLCLPFPTGETPSLGFTVTLVLLNSLAFLLMAIIYTKLYCNLEKEDPSENSQSSMIKHVAWLIFTNCIFFCPVAFFSFAPLITAISISPEIMKSVTLIFFPLPACLNPVLYVFFNPKFKDDWKLLKRRVTRKHGSVSVSISSQGGCGEQDFYYDCGMYSHLQGNLTVCDCCESFLLTKPVSCKHLIKSHSCPVLTVASCQRPEAYWSDCGTQSAHSDYADEEDSFVSDSSDQVQACGRACFYQSRGFPLVRYAYNLPRVRD.

The signal sequence occupies residues 1–24; the sequence is MPGPLRLLCFFALGLLGSAGPSGA. The region spanning 25 to 57 is the LRRNT domain; sequence APPLCAAPCSCDGDRRVDCSGKGLTAVPEGLSA. Residues 25–544 are Extracellular-facing; it reads APPLCAAPCS…LLGSWMIRLT (520 aa). Cystine bridges form between C29/C35 and C33/C43. LRR repeat units follow at residues 58–79, 82–103, 106–127, 130–151, 154–177, 178–199, 202–223, 226–247, 249–270, 273–294, 320–341, 344–365, 366–387, 390–411, and 414–435; these read FTQALDISMNNITQLPEDAFKN, FLEELQLAGNDLSFIHPKALSG, ELKVLTLQNNQLKTVPSEAIRG, ALQSLRLDANHITSVPEDSFEG, QLRHLWLDDNILTEVPVRPLSNLP, TLQALTLALNNISSIPDFAFTN, SLVVLHLHNNKIKSLSQHCFDG, NLETLDLNYNNLDEFPQAIKAL, SLKELGFHSNSISVIPDGAFAG, LLRTIHLYDNPLSFVGNSAFHN, HLESLTLTGTKISSIPDDLCQN, MLRTLDLSYNDIRDLPSFNGCR, ALEEISLQRNQISLIKETTFQG, SLRILDLSRNLIREIHSGAFAK, and TITNLDVSFNELTSFPTEGLNG. An N-linked (GlcNAc...) asparagine glycan is attached at N68. N188 and N199 each carry an N-linked (GlcNAc...) asparagine glycan. N-linked (GlcNAc...) asparagine glycosylation occurs at N294. C339 and C364 are oxidised to a cystine. 2 disulfide bridges follow: C470–C522 and C471–C476. The segment at 487–512 is disordered; it reads NSPQDHSVTKEKGATDAANATSTAES. The span at 501-510 shows a compositional bias: low complexity; the sequence is TDAANATSTA. N505 carries an N-linked (GlcNAc...) asparagine glycan. A helical membrane pass occupies residues 545 to 565; that stretch reads VWFIFLVALLFNLLVILTVFA. The Cytoplasmic segment spans residues 566-575; that stretch reads SCSSLPASKL. A helical membrane pass occupies residues 576–596; it reads FIGLISVSNLLMGIYTGILTF. Topologically, residues 597–619 are extracellular; the sequence is LDAVSWGRFAEFGIWWETGSGCK. A disulfide bridge links C618 with C693. The chain crosses the membrane as a helical span at residues 620–640; sequence VAGSLAVFSSESAVFLLTLAA. Residues 641–661 lie on the Cytoplasmic side of the membrane; that stretch reads VERSVFAKDVMKNGKSSHLRQ. A helical transmembrane segment spans residues 662-682; it reads FQVAALVALLGAAIAGCFPLF. Residues 683-703 are Extracellular-facing; the sequence is HGGQYSASPLCLPFPTGETPS. The chain crosses the membrane as a helical span at residues 704-724; sequence LGFTVTLVLLNSLAFLLMAII. Residues 725–756 lie on the Cytoplasmic side of the membrane; that stretch reads YTKLYCNLEKEDPSENSQSSMIKHVAWLIFTN. The chain crosses the membrane as a helical span at residues 757-777; sequence CIFFCPVAFFSFAPLITAISI. At 778 to 783 the chain is on the extracellular side; the sequence is SPEIMK. A helical transmembrane segment spans residues 784–804; the sequence is SVTLIFFPLPACLNPVLYVFF. Residues 805 to 951 lie on the Cytoplasmic side of the membrane; sequence NPKFKDDWKL…YAYNLPRVRD (147 aa). Residue S920 is modified to Phosphoserine.

This sequence belongs to the G-protein coupled receptor 1 family.

It is found in the cell membrane. Its function is as follows. Receptor for R-spondins that potentiates the canonical Wnt signaling pathway and is involved in the formation of various organs. Upon binding to R-spondins (RSPO1, RSPO2, RSPO3 or RSPO4), associates with phosphorylated LRP6 and frizzled receptors that are activated by extracellular Wnt receptors, triggering the canonical Wnt signaling pathway to increase expression of target genes. In contrast to classical G-protein coupled receptors, does not activate heterotrimeric G-proteins to transduce the signal. Its function as activator of the Wnt signaling pathway is required for the development of various organs, including liver, kidney, intestine, bone, reproductive tract and eye. May also act as a receptor for norrin (NDP), such results however require additional confirmation in vivo. Required during spermatogenesis to activate the Wnt signaling pathway in peritubular myoid cells. Required for the maintenance of intestinal stem cells and Paneth cell differentiation in postnatal intestinal crypts. Acts as a regulator of bone formation and remodeling. Involved in kidney development; required for maintaining the ureteric bud in an undifferentiated state. Involved in the development of the anterior segment of the eye. Required during erythropoiesis. Also acts as a negative regulator of innate immunity by inhibiting TLR2/TLR4 associated pattern-recognition and pro-inflammatory cytokine production. Plays an important role in regulating the circadian rhythms of plasma lipids, partially through regulating the rhythmic expression of MTTP. Required for proper development of GnRH neurons (gonadotropin-releasing hormone expressing neurons) that control the release of reproductive hormones from the pituitary gland. This is Leucine-rich repeat-containing G-protein coupled receptor 4 (Lgr4) from Mus musculus (Mouse).